The sequence spans 186 residues: Coiled-coil domain-containing protein ORF13 (186 aa).

Coiled coils occupy residues 2-30 (GIKE…DFIK) and 63-85 (LREK…QRDK).

This Helicobacter pylori (strain 35A) protein is Coiled-coil domain-containing protein ORF13.